Reading from the N-terminus, the 565-residue chain is Sulfite reductase [NADPH] hemoprotein beta-component (565 aa).

[4Fe-4S] cluster contacts are provided by C429, C435, C474, and C478. Position 478 (C478) interacts with siroheme.

It belongs to the nitrite and sulfite reductase 4Fe-4S domain family. As to quaternary structure, alpha(8)-beta(8). The alpha component is a flavoprotein, the beta component is a hemoprotein. The cofactor is siroheme. [4Fe-4S] cluster serves as cofactor.

The enzyme catalyses hydrogen sulfide + 3 NADP(+) + 3 H2O = sulfite + 3 NADPH + 4 H(+). It participates in sulfur metabolism; hydrogen sulfide biosynthesis; hydrogen sulfide from sulfite (NADPH route): step 1/1. Its function is as follows. Component of the sulfite reductase complex that catalyzes the 6-electron reduction of sulfite to sulfide. This is one of several activities required for the biosynthesis of L-cysteine from sulfate. The sequence is that of Sulfite reductase [NADPH] hemoprotein beta-component from Shewanella pealeana (strain ATCC 700345 / ANG-SQ1).